Reading from the N-terminus, the 321-residue chain is NADPH-dependent codeinone reductase 1-5 (321 aa).

The NADPH site is built by T27 and D51. Residues Y56 and H119 each act as proton donor in the active site. A substrate-binding site is contributed by H119. NADPH contacts are provided by Q187, S214, L216, S264, and R269.

Belongs to the aldo/keto reductase family. In terms of tissue distribution, latex secreting cells (laticifer cells). Expressed constitutively and ubiquitously with highest levels in capsules.

The protein resides in the cytoplasm. It localises to the cytosol. The enzyme catalyses codeine + NADP(+) = codeinone + NADPH + H(+). It carries out the reaction neopine + NADP(+) = neopinone + NADPH + H(+). The catalysed reaction is morphine + NADP(+) = morphinone + NADPH + H(+). It catalyses the reaction neomorphine + NADP(+) = neomorphinone + NADPH + H(+). It participates in alkaloid biosynthesis; morphine biosynthesis. Functionally, NADPH-dependent codeinone reductase involved in biosynthesis of morphinan-type benzylisoquinoline and opiate alkaloids natural products. Reduces codeinone to codeine in the penultimate step in morphine biosynthesis. Can use morphinone, hydrocodone and hydromorphone as substrate during reductive reaction with NADPH as cofactor, and morphine and dihydrocodeine as substrate during oxidative reaction with NADP as cofactor. Converts morphinone to morphine, and neomorphinone to neomorphine. Reduces irreversibly neopinone, a spontaneous isomer of codeinone, to neopine; in planta, neopine levels are limited to low levels. The chain is NADPH-dependent codeinone reductase 1-5 from Papaver somniferum (Opium poppy).